Reading from the N-terminus, the 187-residue chain is MKPTKSNKPKKTTKFPKQTESNTDDFFIIDSVVYFTLLGRGKGTFAFVSLDKWPIVSKYKWYLGKSGYPVSYDLGKMQLHRFIYTLIIEGKIPSDIYVDHIDHNKLNNTNSNLRLATPQQNSFNKSTSSNKKGVRKISENNYKASVVKNGITHEIKNIPTEEQAAQIYNLMAEELFGEFAAPNKIDF.

This is an uncharacterized protein from Acanthamoeba polyphaga mimivirus (APMV).